The sequence spans 100 residues: Large ribosomal subunit protein uL23 (100 aa).

It belongs to the universal ribosomal protein uL23 family. As to quaternary structure, part of the 50S ribosomal subunit. Contacts protein L29, and trigger factor when it is bound to the ribosome.

Functionally, one of the early assembly proteins it binds 23S rRNA. One of the proteins that surrounds the polypeptide exit tunnel on the outside of the ribosome. Forms the main docking site for trigger factor binding to the ribosome. This is Large ribosomal subunit protein uL23 from Mycolicibacterium gilvum (strain PYR-GCK) (Mycobacterium gilvum (strain PYR-GCK)).